We begin with the raw amino-acid sequence, 546 residues long: CTP synthase (546 aa).

The segment at 1-269 (MNSNTKIIFV…DAKLVELLNL (269 aa)) is amidoligase domain. A CTP-binding site is contributed by Ser16. Ser16 contacts UTP. ATP-binding positions include 17 to 22 (SLGKGV) and Asp74. Mg(2+) contacts are provided by Asp74 and Glu143. CTP contacts are provided by residues 150–152 (DIE), 190–195 (KTKPTQ), and Lys226. UTP is bound by residues 190 to 195 (KTKPTQ) and Lys226. The Glutamine amidotransferase type-1 domain maps to 294 to 546 (IIAMVGKYVS…IQAAIENSNN (253 aa)). Gly356 provides a ligand contact to L-glutamine. The active-site Nucleophile; for glutamine hydrolysis is Cys383. L-glutamine-binding positions include 384 to 387 (LGMQ), Glu407, and Arg474. Residues His519 and Glu521 contribute to the active site.

Belongs to the CTP synthase family. Homotetramer.

The enzyme catalyses UTP + L-glutamine + ATP + H2O = CTP + L-glutamate + ADP + phosphate + 2 H(+). It carries out the reaction L-glutamine + H2O = L-glutamate + NH4(+). It catalyses the reaction UTP + NH4(+) + ATP = CTP + ADP + phosphate + 2 H(+). It functions in the pathway pyrimidine metabolism; CTP biosynthesis via de novo pathway; CTP from UDP: step 2/2. Its activity is regulated as follows. Allosterically activated by GTP, when glutamine is the substrate; GTP has no effect on the reaction when ammonia is the substrate. The allosteric effector GTP functions by stabilizing the protein conformation that binds the tetrahedral intermediate(s) formed during glutamine hydrolysis. Inhibited by the product CTP, via allosteric rather than competitive inhibition. Its function is as follows. Catalyzes the ATP-dependent amination of UTP to CTP with either L-glutamine or ammonia as the source of nitrogen. Regulates intracellular CTP levels through interactions with the four ribonucleotide triphosphates. The chain is CTP synthase from Francisella tularensis subsp. holarctica (strain FTNF002-00 / FTA).